A 247-amino-acid polypeptide reads, in one-letter code: ATP synthase subunit a, chloroplastic (247 aa).

The next 5 membrane-spanning stretches (helical) occupy residues 38–58 (QVLI…TLAV), 95–115 (VPFI…GALL), 134–154 (INTT…AGLT), 199–219 (LVVV…VMFL), and 220–240 (GLFT…AYIG).

It belongs to the ATPase A chain family. As to quaternary structure, F-type ATPases have 2 components, CF(1) - the catalytic core - and CF(0) - the membrane proton channel. CF(1) has five subunits: alpha(3), beta(3), gamma(1), delta(1), epsilon(1). CF(0) has four main subunits: a, b, b' and c.

The protein localises to the plastid. It localises to the chloroplast thylakoid membrane. Its function is as follows. Key component of the proton channel; it plays a direct role in the translocation of protons across the membrane. This chain is ATP synthase subunit a, chloroplastic, found in Guizotia abyssinica (Niger).